A 478-amino-acid chain; its full sequence is Zinc finger C3HC-type protein 1-like (478 aa).

Residues 93–147 (CAKYGWSNIECDMLKCSSCNAYLCASLQPVLDFSKYKQRCVELQEALRKAHEKFC) form a C3HC-type zinc finger. A disordered region spans residues 285–389 (LSAPNTPVSP…SSSSDTSPRG (105 aa)). Residues 351–363 (SMGQGESSGLSNE) are compositionally biased toward polar residues. Positions 377 to 388 (LCSSSSSDTSPR) are enriched in low complexity.

Phosphorylated. May also be weakly phosphorylated on Tyr residues.

The protein localises to the nucleus. It localises to the nucleus envelope. Functionally, required for proper positioning of a substantial amount of TPR at the nuclear basket (NB) through interaction with TPR. This is Zinc finger C3HC-type protein 1-like (zc3hc1) from Xenopus tropicalis (Western clawed frog).